Reading from the N-terminus, the 193-residue chain is Holliday junction branch migration complex subunit RuvA (193 aa).

Residues 1-64 are domain I; that stretch reads MIGRIAGVLL…EDAHLLYGFG (64 aa). The tract at residues 65 to 139 is domain II; the sequence is TAEERSTFRE…GKIGADLGAM (75 aa). The interval 139-143 is flexible linker; it reads MAGAA. The interval 144–193 is domain III; that stretch reads SASDHASDILNALLALGYSEKEALTAVKNVPAGTGVSEGIKLALKALSKG.

Belongs to the RuvA family. In terms of assembly, homotetramer. Forms an RuvA(8)-RuvB(12)-Holliday junction (HJ) complex. HJ DNA is sandwiched between 2 RuvA tetramers; dsDNA enters through RuvA and exits via RuvB. An RuvB hexamer assembles on each DNA strand where it exits the tetramer. Each RuvB hexamer is contacted by two RuvA subunits (via domain III) on 2 adjacent RuvB subunits; this complex drives branch migration. In the full resolvosome a probable DNA-RuvA(4)-RuvB(12)-RuvC(2) complex forms which resolves the HJ.

It is found in the cytoplasm. The RuvA-RuvB-RuvC complex processes Holliday junction (HJ) DNA during genetic recombination and DNA repair, while the RuvA-RuvB complex plays an important role in the rescue of blocked DNA replication forks via replication fork reversal (RFR). RuvA specifically binds to HJ cruciform DNA, conferring on it an open structure. The RuvB hexamer acts as an ATP-dependent pump, pulling dsDNA into and through the RuvAB complex. HJ branch migration allows RuvC to scan DNA until it finds its consensus sequence, where it cleaves and resolves the cruciform DNA. The protein is Holliday junction branch migration complex subunit RuvA of Paraburkholderia phytofirmans (strain DSM 17436 / LMG 22146 / PsJN) (Burkholderia phytofirmans).